We begin with the raw amino-acid sequence, 706 residues long: Termination factor NPH-I homolog (706 aa).

The Helicase ATP-binding domain maps to 62–227 (IGQGENTRGL…VPCFNMLSGR (166 aa)). Position 75 to 82 (75 to 82 (HQMGMGKT)) interacts with ATP. The short motif at 168–171 (DEAH) is the DEAH box element. Positions 378 to 599 (KIVCMLKNIK…HLNSAFRDLL (222 aa)) constitute a Helicase C-terminal domain.

This sequence belongs to the DEAD box helicase family. DEAH subfamily. As to quaternary structure, part of the viral DNA-directed RNA polymerase that consists of 8 polII-like subunits (RPB1, RPB2, RPB3, RPB5, RPB6, RPB7, RPB9, RPB10), a capping enzyme and a termination factor.

The protein resides in the virion. Its function is as follows. Putative DNA-dependent ATPase required for providing the needed energy to achieve the termination of early transcripts. This African swine fever virus (isolate Pig/Kenya/KEN-50/1950) (ASFV) protein is Termination factor NPH-I homolog.